The sequence spans 235 residues: Sugar fermentation stimulation protein homolog (235 aa).

The protein belongs to the SfsA family.

This Pseudomonas aeruginosa (strain ATCC 15692 / DSM 22644 / CIP 104116 / JCM 14847 / LMG 12228 / 1C / PRS 101 / PAO1) protein is Sugar fermentation stimulation protein homolog.